Here is a 284-residue protein sequence, read N- to C-terminus: MASHDSYTGRLPGAFMNPGTSSFTEFLASYNPDLLPGRHMTALAGGMPGNVEAPHATTIVAVTFPGGVVMAGDRRATAGNMIAQRDVEKVFRADEFSAVAIAGTAGIGMEIVRLFQVEIEHYEKMEGRTLSLEGKANRLATMIRANLGMAMQGLVAVPLFAGYDTEREVGRIFSYDPAGGRYEEHEHHSIGSGSVFARGALKKLWRPDLSAQDAALVCVQALYDAADDDSATGGPDLIRKIYPVVATVTADGFRRLPEEEVGELARIVVDGRHDSPGGPTAPLR.

A propeptide spans 1–56 (MASHDSYTGRLPGAFMNPGTSSFTEFLASYNPDLLPGRHMTALAGGMPGNVEAPHA) (removed in mature form; by autocatalysis). Catalysis depends on Thr-57, which acts as the Nucleophile.

It belongs to the peptidase T1B family. As to quaternary structure, the 20S proteasome core is composed of 14 alpha and 14 beta subunits that assemble into four stacked heptameric rings, resulting in a barrel-shaped structure. The two inner rings, each composed of seven catalytic beta subunits, are sandwiched by two outer rings, each composed of seven alpha subunits. The catalytic chamber with the active sites is on the inside of the barrel. Has a gated structure, the ends of the cylinder being occluded by the N-termini of the alpha-subunits. Is capped by the proteasome-associated ATPase, ARC.

It is found in the cytoplasm. The catalysed reaction is Cleavage of peptide bonds with very broad specificity.. The protein operates within protein degradation; proteasomal Pup-dependent pathway. Its activity is regulated as follows. The formation of the proteasomal ATPase ARC-20S proteasome complex, likely via the docking of the C-termini of ARC into the intersubunit pockets in the alpha-rings, may trigger opening of the gate for substrate entry. Interconversion between the open-gate and close-gate conformations leads to a dynamic regulation of the 20S proteasome proteolysis activity. Component of the proteasome core, a large protease complex with broad specificity involved in protein degradation. This chain is Proteasome subunit beta 1, found in Thermomonospora curvata (strain ATCC 19995 / DSM 43183 / JCM 3096 / KCTC 9072 / NBRC 15933 / NCIMB 10081 / Henssen B9).